We begin with the raw amino-acid sequence, 318 residues long: Olfactory receptor 13C2 (318 aa).

Over 1–25 (MEWENHTILVEFFLKGLSGHPRLEL) the chain is Extracellular. Residue asparagine 5 is glycosylated (N-linked (GlcNAc...) asparagine). Residues 26–46 (LFFVLIFIMYVVILLGNGTLI) traverse the membrane as a helical segment. The Cytoplasmic portion of the chain corresponds to 47–54 (LISILDPH). The chain crosses the membrane as a helical span at residues 55-75 (LHTPMYFFLGNLSFLDICYTT). Over 76–99 (TSIPSTLVSFLSERKTISLSGCAV) the chain is Extracellular. Cysteines 97 and 189 form a disulfide. Residues 100 to 120 (QMFLGLAMGTTECVLLGMMAF) form a helical membrane-spanning segment. Over 121-139 (DRYVAICNPLRYPIIMSKD) the chain is Cytoplasmic. A helical membrane pass occupies residues 140 to 160 (AYVPMAAGSWIIGAVNSAVQS). Topologically, residues 161–197 (VFVVQLPFCRNNIINHFTCEILAVMKLACADISDNEF) are extracellular. Residues 198 to 217 (IMLVATTLFILTPLLLIIVS) form a helical membrane-spanning segment. Over 218-237 (YTLIIVSIFKISSSEGRSKA) the chain is Cytoplasmic. Residues 238–258 (SSTCSAHLTVVIIFYGTILFM) traverse the membrane as a helical segment. Over 259–277 (YMKPKSKETLNSDDLDATD) the chain is Extracellular. Residues 278-298 (KIISMFYGVMTPMMNPLIYSL) traverse the membrane as a helical segment. Residues 299 to 318 (RNKDVKEAVKHLLNRRFFSK) lie on the Cytoplasmic side of the membrane.

The protein belongs to the G-protein coupled receptor 1 family.

It is found in the cell membrane. Its function is as follows. Odorant receptor. The polypeptide is Olfactory receptor 13C2 (OR13C2) (Homo sapiens (Human)).